The following is a 251-amino-acid chain: Haloacid dehalogenase-like hydrolase domain-containing protein 3 (251 aa).

At K15 the chain carries N6-acetyllysine; alternate. Position 15 is an N6-succinyllysine; alternate (K15). N6-acetyllysine is present on K130.

It belongs to the HAD-like hydrolase superfamily.

The polypeptide is Haloacid dehalogenase-like hydrolase domain-containing protein 3 (Hdhd3) (Mus musculus (Mouse)).